A 328-amino-acid polypeptide reads, in one-letter code: GMP reductase (328 aa).

The active-site Thioimidate intermediate is the Cys176. 205–228 contacts NADP(+); that stretch reads IIADGGIRTHGDIAKSIRFGASMI.

Belongs to the IMPDH/GMPR family. GuaC type 2 subfamily.

It catalyses the reaction IMP + NH4(+) + NADP(+) = GMP + NADPH + 2 H(+). Functionally, catalyzes the irreversible NADPH-dependent deamination of GMP to IMP. It functions in the conversion of nucleobase, nucleoside and nucleotide derivatives of G to A nucleotides, and in maintaining the intracellular balance of A and G nucleotides. This is GMP reductase from Streptococcus pneumoniae (strain ATCC 700669 / Spain 23F-1).